We begin with the raw amino-acid sequence, 543 residues long: Chaperonin GroEL (543 aa).

Residues 29–32, 86–90, glycine 413, and aspartate 504 each bind ATP; these read TVGP and DGTTT.

It belongs to the chaperonin (HSP60) family. Forms a cylinder of 14 subunits composed of two heptameric rings stacked back-to-back. Interacts with the co-chaperonin GroES.

It localises to the cytoplasm. It catalyses the reaction ATP + H2O + a folded polypeptide = ADP + phosphate + an unfolded polypeptide.. Together with its co-chaperonin GroES, plays an essential role in assisting protein folding. The GroEL-GroES system forms a nano-cage that allows encapsulation of the non-native substrate proteins and provides a physical environment optimized to promote and accelerate protein folding. The polypeptide is Chaperonin GroEL (Mycoplasma genitalium (strain ATCC 33530 / DSM 19775 / NCTC 10195 / G37) (Mycoplasmoides genitalium)).